A 357-amino-acid chain; its full sequence is NADH-quinone oxidoreductase subunit H (357 aa).

A run of 8 helical transmembrane segments spans residues 22 to 42 (VAIILIIFIKAIALLIPLMLV), 94 to 114 (IYLFLLAPVLAIAPAIAVWAV), 130 to 150 (LLYVLAIGSIGVYGIILAGWA), 164 to 184 (AALLVSYEIVIGFALVTVVMI), 199 to 219 (GGIIYWYFIPLFPIMIIFFIS), 254 to 274 (FFLAEYANMILMAVLSVIMFF), 294 to 314 (IPGMIWLLAKTTFFMFLYLWV), and 333 to 353 (VFLPITIIWIFVVALMTQLQL).

It belongs to the complex I subunit 1 family. As to quaternary structure, NDH-1 is composed of 14 different subunits. Subunits NuoA, H, J, K, L, M, N constitute the membrane sector of the complex.

It localises to the cell inner membrane. It catalyses the reaction a quinone + NADH + 5 H(+)(in) = a quinol + NAD(+) + 4 H(+)(out). Its function is as follows. NDH-1 shuttles electrons from NADH, via FMN and iron-sulfur (Fe-S) centers, to quinones in the respiratory chain. The immediate electron acceptor for the enzyme in this species is believed to be ubiquinone. Couples the redox reaction to proton translocation (for every two electrons transferred, four hydrogen ions are translocated across the cytoplasmic membrane), and thus conserves the redox energy in a proton gradient. This subunit may bind ubiquinone. In Vesicomyosocius okutanii subsp. Calyptogena okutanii (strain HA), this protein is NADH-quinone oxidoreductase subunit H.